Consider the following 299-residue polypeptide: DNA-binding transcriptional activator HetR (299 aa).

Residue Ser152 is part of the active site.

The protein belongs to the peptidase S48 family. In terms of assembly, homodimer; disulfide-linked.

In terms of biological role, controls heterocyst differentiation. Dimerization is required for DNA-binding. Has both a protease and a DNA-binding activity. Increased expression leads to more heterocysts than usual. This chain is DNA-binding transcriptional activator HetR, found in Nostoc punctiforme (strain ATCC 29133 / PCC 73102).